Consider the following 211-residue polypeptide: Thymidylate kinase (211 aa).

Residue 10 to 17 participates in ATP binding; the sequence is GVEGCGKT.

It belongs to the thymidylate kinase family.

The catalysed reaction is dTMP + ATP = dTDP + ADP. In terms of biological role, phosphorylation of dTMP to form dTDP in both de novo and salvage pathways of dTTP synthesis. In Trichormus variabilis (strain ATCC 29413 / PCC 7937) (Anabaena variabilis), this protein is Thymidylate kinase.